We begin with the raw amino-acid sequence, 156 residues long: MVIATKHFGEIELEEDKILTFDHGIFGFEDCKRYTILYDGEDENSSVISWLQSLDEVSLALPIIQPSHVIDQYNPVIEDELLVSLGDIKEENIVVFLTLTVPSDLTKMTTNLKAPFIINTANKKGCQVVVEDPMFVVKYPVYEKFQNRAKKEDGEC.

This sequence belongs to the FliW family. Interacts with translational regulator CsrA and flagellin(s).

It is found in the cytoplasm. Its function is as follows. Acts as an anti-CsrA protein, binds CsrA and prevents it from repressing translation of its target genes, one of which is flagellin. Binds to flagellin and participates in the assembly of the flagellum. The chain is Flagellar assembly factor FliW from Lachnoclostridium phytofermentans (strain ATCC 700394 / DSM 18823 / ISDg) (Clostridium phytofermentans).